The sequence spans 727 residues: MEGERKNNNKRWYFTREQLENSPSRRFGLDPDKELSNRQQAANLLQDMGQRLNVSQLTINTAIVYMHRFYMIQSFTQFHRNSVAPAALFLAAKVEEQPKKLEHVIKVAHTCLHPQESLPDTRSEAYLQQVQDLVILESIILQTLGFELTIDHPHTHVVKCTQLVRASKDLAQTSYFMATNSLHLTTFSLQYTPPVVACVCIHLACKWSNWEIPVSTDGKHWWEYVDATVTLELLDELTHEFLQILEKTPNRLKRIWNWRAWQADRKTKADDRGADENSSEQTILNMISQSSSDTTIAGLMSMSASSTTSAVPSLPATEDSKSNLSNVEMLSSERWLSSHPPFKVEPAQGYRKSENLALVGADHSLQQDGSNAFVSQKQNSKSVPSAKVSLKEYRAKHAEELAAQKRQLENMEANVKSQYAYAAQNLLSHHDSHSSVILKMPIEGSENPERPFLEKTDKTALKMRIPMTGGDKAASIKPEEIKMRIKVHTAADKHNSVDDSVTKNREHKEKHKTHPSNHHHHHNHHSHKHSHSQLPAGTGNKRLGDPKHSSQTSTLAHKPYSLSSSFSSSSSSRKRPLPEETGGVAYDHSTKTAKSAKSSSINFSFPPLPTMAQLPGHSSDTSGLHFSQPSCKTRVPHMKLDKSSTGANSHNTPQTTDYQDTVNMLNSLLNAQGVQPTQPPAFEYVHSYGEYMNPRAGGMSSRSGNTDKPRPPPLPSEPPPPLPPLPK.

Ser117 is modified (phosphoserine). The short motif at 253–270 is the Nuclear localization signal element; the sequence is KRIWNWRAWQADRKTKAD. A Glycyl lysine isopeptide (Lys-Gly) (interchain with G-Cter in SUMO2) cross-link involves residue Lys343. Ser389 carries the post-translational modification Phosphoserine. Positions 389–420 form a coiled coil; that stretch reads SLKEYRAKHAEELAAQKRQLENMEANVKSQYA. Residue Lys391 is modified to N6-acetyllysine. Lys416 participates in a covalent cross-link: Glycyl lysine isopeptide (Lys-Gly) (interchain with G-Cter in SUMO2). ADP-ribosylserine occurs at positions 417 and 475. The interval 481–551 is histidine-rich domain (HRD); the sequence is IKMRIKVHTA…RLGDPKHSSQ (71 aa). Lys482 participates in a covalent cross-link: Glycyl lysine isopeptide (Lys-Gly) (interchain with G-Cter in SUMO2). Lys486 bears the N6-(ADP-ribosyl)lysine mark. Over residues 487 to 507 the composition is skewed to basic and acidic residues; sequence VHTAADKHNSVDDSVTKNREH. 2 disordered regions span residues 487 to 631 and 691 to 727; these read VHTA…QPSC and YMNP…PLPK. ADP-ribosylhistidine is present on His488. Phosphoserine is present on residues Ser496 and Ser500. Basic residues predominate over residues 508 to 531; the sequence is KEKHKTHPSNHHHHHNHHSHKHSH. An ADP-ribosylhistidine modification is found at His531. An ADP-ribosylserine mark is found at Ser532, Ser550, and Ser553. His557 carries the post-translational modification ADP-ribosylhistidine. Positions 561-571 are enriched in low complexity; the sequence is SLSSSFSSSSS. Ser564 carries the post-translational modification ADP-ribosylserine. Residue Ser565 is modified to Phosphoserine. A compositionally biased stretch (polar residues) spans 616–631; it reads GHSSDTSGLHFSQPSC. Residues 711 to 727 show a composition bias toward pro residues; sequence PPPLPSEPPPPLPPLPK.

This sequence belongs to the cyclin family. Cyclin C subfamily. In terms of assembly, cyclin-T1 is the predominant cyclin that associates with CDK9 to form a heterodimer called P-TEFb. P-TEFb forms a complex with AFF4/AF5Q31. Component of a complex which is at least composed of HTATSF1/Tat-SF1, P-TEFb complex, RNA pol II, SUPT5H, and NCL/nucleolin. Component of the 7SK snRNP complex at least composed of P-TEFb (composed of CDK9 and CCNT1/cyclin-T1), HEXIM1, HEXIM2, BCDIN3, SART3 proteins and 7SK and U6 snRNAs. Interacts (via central region) with ZMYND8 (via N-terminus); the interaction is direct and the association appears to occur between homodimeric ZMYND8 and the activated form of the P-TEFb complex. Interacts with BRD4, targets chromatin binding. Interacts with JMJD6. Interacts with MDFIC. Interacts with HSF1. Interacts with HTATSF1. Interacts with TBX21. (Microbial infection) Binds to BIV Tat, however Tat binds TAR RNA in a Cyc-T1-independent mode. ADP-ribosylation on serine residues by PARP1 in response to DNA damage disrupts the phase separation activity of CCNT1, thereby preventing activation of CDK9.

It is found in the nucleus. Its function is as follows. Regulatory subunit of the cyclin-dependent kinase pair (CDK9/cyclin-T1) complex, also called positive transcription elongation factor B (P-TEFb), which facilitates the transition from abortive to productive elongation by phosphorylating the CTD (C-terminal domain) of the large subunit of RNA polymerase II (RNA Pol II). Required to activate the protein kinase activity of CDK9: acts by mediating formation of liquid-liquid phase separation (LLPS) that enhances binding of P-TEFb to the CTD of RNA Pol II. The chain is Cyclin-T1 (CCNT1) from Bos taurus (Bovine).